Here is a 451-residue protein sequence, read N- to C-terminus: Signal transduction histidine-protein kinase ArlS (451 aa).

The next 2 membrane-spanning stretches (helical) occupy residues 11–31 (IIVTTMITFVTIFLFCLIIIF) and 156–176 (IIALAFGVIATIITATISYVF). Positions 178-231 (TQITKPLVSLSNKMIEIRRDGFQNKLQLNTNYEEIDNLANTFNEMMSQIEESFN) constitute an HAMP domain. Residues 239 to 451 (DASHELRTPL…NKGTTFKIIF (213 aa)) enclose the Histidine kinase domain. Position 242 is a phosphohistidine; by autocatalysis (His-242).

Autophosphorylated.

It is found in the cell membrane. The enzyme catalyses ATP + protein L-histidine = ADP + protein N-phospho-L-histidine.. Member of the two-component regulatory system ArlS/ArlR involved in the regulation of adhesion, autolysis, multidrug resistance and virulence. ArlS probably functions as a sensor protein kinase which is autophosphorylated at a histidine residue and transfers its phosphate group to ArlR. This is Signal transduction histidine-protein kinase ArlS (arlS) from Staphylococcus aureus (strain bovine RF122 / ET3-1).